Reading from the N-terminus, the 234-residue chain is Ribosome-inactivating protein lychnin (234 aa).

Cys-32 and Cys-115 are oxidised to a cystine. The active site involves Glu-170.

In terms of assembly, monomer.

The enzyme catalyses Endohydrolysis of the N-glycosidic bond at one specific adenosine on the 28S rRNA.. Functionally, ribosome-inactivating protein of type 1, inhibits protein synthesis in animal cells. Inhibits cell-free translation in rabbit reticulocyte lysate system with an IC(50) of 0.17 nM. The chain is Ribosome-inactivating protein lychnin from Silene chalcedonica (Maltese-cross).